A 33-amino-acid polypeptide reads, in one-letter code: uncharacterized protein (33 aa).

Residues 1–33 (MQPGTGLSFDISQILKQGSDPKQKLPERQAIVL) form a disordered region.

This is an uncharacterized protein from Caenorhabditis elegans.